Consider the following 400-residue polypeptide: MTRVVVIGSGFAGLWAALGAARRLDELAVPAGTVDVMVVSNKPFHDIRVRNYEADLSACRIPLGDVLGPAGVAHVTAEVTAIDADGRRVTTSTGASYSYDRLVLASGSHVVKPALPGLAEFGFDVDTYDGAVRLQQHLQGLAGGPLTSAAATVVVVGAGLTGIETACELPGRLHALFARGDGVTPRVVLIDHNPFVGSDMGLSARPVIEQALLDNGVETRTGVSVAAVSPGGVTLSSGERLAAATVVWCAGMRASRLTEQLPVARDRLGRLQVDDYLRVIGVPAMFAAGDVAAARMDDEHLSVMSCQHGRPMGRYAGCNVINDLFDQPLLALRIPWYVTVLDLGSAGAVYTEGWERKVVSQGAPAKTTKQSINTRRIYPPLNGSRADLLAAAAPRVQPRP.

It belongs to the NADH dehydrogenase family. FAD serves as cofactor.

The sequence is that of NADH dehydrogenase-like protein MT1860 from Mycobacterium tuberculosis (strain CDC 1551 / Oshkosh).